Reading from the N-terminus, the 382-residue chain is Probable purine permease 4 (382 aa).

10 helical membrane passes run 25 to 45, 62 to 82, 98 to 118, 121 to 141, 150 to 170, 185 to 205, 224 to 244, 260 to 280, 291 to 311, and 315 to 335; these read LTLL…SSLL, WVQS…HYVL, LIFS…FSWG, YLPV…TLIL, ITFS…LLAL, YFIG…YLPV, LVME…EGGF, TFYW…SFAA, ITGG…GVVA, and VFGG…SSYT. Residues 66-170 enclose the EamA domain; the sequence is AGFPLLLILI…LTLSSVLLAL (105 aa). Residues 345–364 form a disordered region; it reads EEKEKGEYSGVKTTEDSGEM.

The protein belongs to the purine permeases (TC 2.A.7.14) family.

It localises to the membrane. The polypeptide is Probable purine permease 4 (PUP4) (Arabidopsis thaliana (Mouse-ear cress)).